The following is an 884-amino-acid chain: Protein P (884 aa).

The segment at 1-184 is terminal protein domain (TP); that stretch reads MHPFSRLFRN…GKPYSWEHRQ (184 aa). The spacer stretch occupies residues 185–387; the sequence is LVQHNGQQHK…YCIHHIVSSL (203 aa). The tract at residues 299-345 is disordered; that stretch reads RNSGHTTWFSSASNSNKSRSREKAYSSNSTSKRYSPPLNYEKSDFSS. A polymerase/reverse transcriptase domain (RT) region spans residues 388–729; that stretch reads DDWGPCTVTG…YEELWPVVRQ (342 aa). The Reverse transcriptase domain occupies 398–639; it reads DVTIKSPRTP…NHLHFMGYVI (242 aa). Positions 470, 590, and 591 each coordinate Mg(2+).

It belongs to the hepadnaviridae P protein family.

It carries out the reaction DNA(n) + a 2'-deoxyribonucleoside 5'-triphosphate = DNA(n+1) + diphosphate. The catalysed reaction is Endonucleolytic cleavage to 5'-phosphomonoester.. Its activity is regulated as follows. Activated by host HSP70 and HSP40 in vitro to be able to bind the epsilon loop of the pgRNA. Because deletion of the RNase H region renders the protein partly chaperone-independent, the chaperones may be needed indirectly to relieve occlusion of the RNA-binding site by this domain. Inhibited by several reverse-transcriptase inhibitors: Lamivudine, Adefovir and Entecavir. Functionally, multifunctional enzyme that converts the viral RNA genome into dsDNA in viral cytoplasmic capsids. This enzyme displays a DNA polymerase activity that can copy either DNA or RNA templates, and a ribonuclease H (RNase H) activity that cleaves the RNA strand of RNA-DNA heteroduplexes in a partially processive 3'- to 5'-endonucleasic mode. Neo-synthesized pregenomic RNA (pgRNA) are encapsidated together with the P protein, and reverse-transcribed inside the nucleocapsid. Initiation of reverse-transcription occurs first by binding the epsilon loop on the pgRNA genome, and is initiated by protein priming, thereby the 5'-end of (-)DNA is covalently linked to P protein. Partial (+)DNA is synthesized from the (-)DNA template and generates the relaxed circular DNA (RC-DNA) genome. After budding and infection, the RC-DNA migrates in the nucleus, and is converted into a plasmid-like covalently closed circular DNA (cccDNA). The activity of P protein does not seem to be necessary for cccDNA generation, and is presumably released from (+)DNA by host nuclear DNA repair machinery. In Marmota monax (Woodchuck), this protein is Protein P.